Here is an 842-residue protein sequence, read N- to C-terminus: Protein P (842 aa).

Residues 1 to 177 (MPLSYQHFRR…FCGSPYSWEQ (177 aa)) form a terminal protein domain (TP) region. Positions 178 to 345 (ELHHGAFLDG…YCLSHLVNLL (168 aa)) are spacer. Residues 186–273 (DGPSRMGEES…AKNIASRSAS (88 aa)) form a disordered region. Residues 223 to 239 (GPQSQQRPLDRSQQGRS) are compositionally biased toward polar residues. Residues 346 to 689 (EDWGPCTEHG…YLNLYPVARQ (344 aa)) are polymerase/reverse transcriptase domain (RT). The region spanning 356–599 (RHHIRIPRTP…YSLNFMGYVI (244 aa)) is the Reverse transcriptase domain. Asp-428, Asp-550, and Asp-551 together coordinate Mg(2+).

It belongs to the hepadnaviridae P protein family.

It catalyses the reaction DNA(n) + a 2'-deoxyribonucleoside 5'-triphosphate = DNA(n+1) + diphosphate. It carries out the reaction Endonucleolytic cleavage to 5'-phosphomonoester.. Activated by host HSP70 and HSP40 in vitro to be able to bind the epsilon loop of the pgRNA. Because deletion of the RNase H region renders the protein partly chaperone-independent, the chaperones may be needed indirectly to relieve occlusion of the RNA-binding site by this domain. Inhibited by several reverse-transcriptase inhibitors: Lamivudine, Adefovir and Entecavir. In terms of biological role, multifunctional enzyme that converts the viral RNA genome into dsDNA in viral cytoplasmic capsids. This enzyme displays a DNA polymerase activity that can copy either DNA or RNA templates, and a ribonuclease H (RNase H) activity that cleaves the RNA strand of RNA-DNA heteroduplexes in a partially processive 3'- to 5'-endonucleasic mode. Neo-synthesized pregenomic RNA (pgRNA) are encapsidated together with the P protein, and reverse-transcribed inside the nucleocapsid. Initiation of reverse-transcription occurs first by binding the epsilon loop on the pgRNA genome, and is initiated by protein priming, thereby the 5'-end of (-)DNA is covalently linked to P protein. Partial (+)DNA is synthesized from the (-)DNA template and generates the relaxed circular DNA (RC-DNA) genome. After budding and infection, the RC-DNA migrates in the nucleus, and is converted into a plasmid-like covalently closed circular DNA (cccDNA). The activity of P protein does not seem to be necessary for cccDNA generation, and is presumably released from (+)DNA by host nuclear DNA repair machinery. The polypeptide is Protein P (Homo sapiens (Human)).